The following is an 803-amino-acid chain: Volume-regulated anion channel subunit LRRC8C (803 aa).

Residues 1–22 (MIPVTEFRQFSEQQPAFRVLKP) are Cytoplasmic-facing. The helical transmembrane segment at 23–43 (WWDVFTDYLSVAMLMIGVFGC) threads the bilayer. Topologically, residues 44–125 (TLQVMQDKII…YERALHWYAK (82 aa)) are extracellular. 2 disulfide bridges follow: cysteine 54–cysteine 308 and cysteine 115–cysteine 293. Asparagine 64 and asparagine 70 each carry an N-linked (GlcNAc...) asparagine glycan. The chain crosses the membrane as a helical span at residues 126–146 (YFPYLVLIHTLVFMLCSNFWF). The Cytoplasmic portion of the chain corresponds to 147–266 (KFPGSSSKIE…ILYAMYVRQT (120 aa)). The tract at residues 177–211 (EVSGEDSEEKDNRKNNMNRSNTIQSGPEGSLVKSQ) is disordered. The span at 191–211 (NNMNRSNTIQSGPEGSLVKSQ) shows a compositional bias: polar residues. Residues serine 212 and serine 215 each carry the phosphoserine modification. The helical transmembrane segment at 267 to 287 (VLKVIKFLIIIAYNSALVSKV) threads the bilayer. Residues 288–320 (QFTVDCNVDIQDMTGYKNFSCNHTMAHLFSKLS) are Extracellular-facing. Residues 321 to 341 (FCYLCFVSIYGLTCLYTLYWL) traverse the membrane as a helical segment. The Cytoplasmic portion of the chain corresponds to 342–803 (FYRSLREYSF…SDVREQMKAD (462 aa)). LRR repeat units lie at residues 397 to 420 (ENKL…KLQT), 421 to 443 (NAHN…VFEI), 446 to 466 (LQSL…IAQL), 467 to 488 (DNLQ…ALSF), 490 to 513 (KENL…MYGL), 515 to 537 (NLEE…TLES), 541 to 563 (LKSL…VVDV), 565 to 587 (SHLQ…NLKK), 588 to 611 (MTNL…VFSL), 613 to 635 (SLQE…SFQH), 637 to 659 (RKLT…IKKL), 660 to 682 (TSLE…LFLC), 684 to 705 (KIRY…IGVL), 706 to 728 (QSLQ…LYFC), 730 to 751 (KLKT…IGNL), 752 to 774 (LFLS…LGDC), and 776 to 799 (ALKR…VREQ).

Belongs to the LRRC8 family. As to quaternary structure, heterohexamer; oligomerizes with other LRRC8 proteins (LRRC8A, LRRC8B, LRRC8D and/or LRRC8E) to form a heterohexamer. Homoheptamer; inactive, likely because it is not targeted to the plasma membrane in the absence of LRRC8A. In vivo, the subunit composition may depend primarily on expression levels, and heterooligomeric channels containing various proportions of the different LRRC8 proteins may coexist.

The protein resides in the cell membrane. The protein localises to the endoplasmic reticulum membrane. The enzyme catalyses chloride(in) = chloride(out). It catalyses the reaction iodide(out) = iodide(in). It carries out the reaction taurine(out) = taurine(in). The catalysed reaction is 2',3'-cGAMP(out) = 2',3'-cGAMP(in). In terms of biological role, non-essential component of the volume-regulated anion channel (VRAC, also named VSOAC channel), an anion channel required to maintain a constant cell volume in response to extracellular or intracellular osmotic changes. The VRAC channel conducts iodide better than chloride and can also conduct organic osmolytes like taurine. Plays a redundant role in the efflux of amino acids, such as aspartate and glutamate, in response to osmotic stress. The VRAC channel also mediates transport of immunoreactive cyclic dinucleotide GMP-AMP (2'-3'-cGAMP), an immune messenger produced in response to DNA virus in the cytosol. Channel activity requires LRRC8A plus at least one other family member (LRRC8B, LRRC8C, LRRC8D or LRRC8E); channel characteristics depend on the precise subunit composition. This is Volume-regulated anion channel subunit LRRC8C from Rattus norvegicus (Rat).